The sequence spans 72 residues: Large ribosomal subunit protein bL31 (72 aa).

Zn(2+) contacts are provided by Cys-16, Cys-18, Cys-38, and Cys-41.

It belongs to the bacterial ribosomal protein bL31 family. Type A subfamily. In terms of assembly, part of the 50S ribosomal subunit. The cofactor is Zn(2+).

In terms of biological role, binds the 23S rRNA. The polypeptide is Large ribosomal subunit protein bL31 (Vibrio cholerae serotype O1 (strain ATCC 39541 / Classical Ogawa 395 / O395)).